We begin with the raw amino-acid sequence, 130 residues long: MSATTLEILEKLKAITLLEATELVSQIEKTFGVDASAPAVSGLRPILVEPIKQEDIIEEKTTFDVILEEVPSDKRVPILKVIRALTSLDLKQAKESITDLPKTILQGVSKEESEAAKQQLEAVGGKIKVS.

The protein belongs to the bacterial ribosomal protein bL12 family. In terms of assembly, homodimer. Part of the ribosomal stalk of the 50S ribosomal subunit. Forms a multimeric L10(L12)X complex, where L10 forms an elongated spine to which 2 to 4 L12 dimers bind in a sequential fashion. Binds GTP-bound translation factors.

Its subcellular location is the plastid. Functionally, forms part of the ribosomal stalk which helps the ribosome interact with GTP-bound translation factors. Is thus essential for accurate translation. This chain is Large ribosomal subunit protein bL12c, found in Prototheca wickerhamii.